A 61-amino-acid polypeptide reads, in one-letter code: Potassium channel toxin alpha-KTx 5.3 (61 aa).

A signal peptide spans 1–28 (MHNYYKIVLIMVAFFAVIITFSNIQVEG). 3 cysteine pairs are disulfide-bonded: C31/C49, C36/C54, and C40/C56. The [R/K]XCQ motif stretch occupies residues 34–37 (KRCQ). The residue at position 59 (H59) is a Histidine amide.

The protein belongs to the short scorpion toxin superfamily. Potassium channel inhibitor family. Alpha-KTx 05 subfamily. As to expression, expressed by the venom gland.

The protein resides in the secreted. In terms of biological role, blocks small conductance calcium-activated potassium channels (KCNN, SK). Has also been shown to weakly inhibit Kv11.1/KCNH2/ERG1, Kv1.2/KCNA2, Kv1.3/KCNA3 and Kv2.1/KCNB1 voltage-gated potassium channels. This chain is Potassium channel toxin alpha-KTx 5.3, found in Olivierus martensii (Manchurian scorpion).